The following is a 579-amino-acid chain: Aspartate--tRNA(Asp/Asn) ligase (579 aa).

Glu-171 provides a ligand contact to L-aspartate. The tract at residues 195-198 is aspartate; it reads QLFK. Arg-217 serves as a coordination point for L-aspartate. ATP contacts are provided by residues 217-219 and Gln-226; that span reads RDE. His-444 is a binding site for L-aspartate. Glu-475 contacts ATP. Residue Arg-482 coordinates L-aspartate. 527-530 is a binding site for ATP; it reads GLDR.

It belongs to the class-II aminoacyl-tRNA synthetase family. Type 1 subfamily. In terms of assembly, homodimer.

It is found in the cytoplasm. The catalysed reaction is tRNA(Asx) + L-aspartate + ATP = L-aspartyl-tRNA(Asx) + AMP + diphosphate. Its function is as follows. Aspartyl-tRNA synthetase with relaxed tRNA specificity since it is able to aspartylate not only its cognate tRNA(Asp) but also tRNA(Asn). Reaction proceeds in two steps: L-aspartate is first activated by ATP to form Asp-AMP and then transferred to the acceptor end of tRNA(Asp/Asn). The polypeptide is Aspartate--tRNA(Asp/Asn) ligase (Thermotoga maritima (strain ATCC 43589 / DSM 3109 / JCM 10099 / NBRC 100826 / MSB8)).